We begin with the raw amino-acid sequence, 387 residues long: 3-ketoacyl-CoA thiolase (387 aa).

Cys91 acts as the Acyl-thioester intermediate in catalysis. Active-site proton acceptor residues include His343 and Cys373.

Belongs to the thiolase-like superfamily. Thiolase family. As to quaternary structure, heterotetramer of two alpha chains (FadB) and two beta chains (FadA).

The protein resides in the cytoplasm. The catalysed reaction is an acyl-CoA + acetyl-CoA = a 3-oxoacyl-CoA + CoA. Its pathway is lipid metabolism; fatty acid beta-oxidation. In terms of biological role, catalyzes the final step of fatty acid oxidation in which acetyl-CoA is released and the CoA ester of a fatty acid two carbons shorter is formed. This is 3-ketoacyl-CoA thiolase from Shewanella sp. (strain ANA-3).